An 83-amino-acid chain; its full sequence is Aminoacyl carrier protein (83 aa).

In terms of domain architecture, Carrier spans 1–80 (MNATIREILA…DTVKLILDGK (80 aa)). S35 bears the O-(pantetheine 4'-phosphoryl)serine mark.

Post-translationally, 4'-phosphopantetheine is transferred from CoA to a specific serine of the apo-form of this carrier protein.

Functionally, aminoacyl carrier protein. Can be charged with L-alanine, L-glycine or L-serine, via the formation of a thioester bond between the amino acid and the 4'-phosphopantetheinyl prosthetic group, catalyzed by the Atu2573 ligase. The polypeptide is Aminoacyl carrier protein (Agrobacterium fabrum (strain C58 / ATCC 33970) (Agrobacterium tumefaciens (strain C58))).